Reading from the N-terminus, the 417-residue chain is Serine hydroxymethyltransferase (417 aa).

(6S)-5,6,7,8-tetrahydrofolate is bound by residues Leu-121 and 125-127 (GHL). An N6-(pyridoxal phosphate)lysine modification is found at Lys-229. 355 to 357 (SPF) is a (6S)-5,6,7,8-tetrahydrofolate binding site.

This sequence belongs to the SHMT family. Homodimer. The cofactor is pyridoxal 5'-phosphate.

The protein resides in the cytoplasm. The catalysed reaction is (6R)-5,10-methylene-5,6,7,8-tetrahydrofolate + glycine + H2O = (6S)-5,6,7,8-tetrahydrofolate + L-serine. The protein operates within one-carbon metabolism; tetrahydrofolate interconversion. It participates in amino-acid biosynthesis; glycine biosynthesis; glycine from L-serine: step 1/1. Its function is as follows. Catalyzes the reversible interconversion of serine and glycine with tetrahydrofolate (THF) serving as the one-carbon carrier. This reaction serves as the major source of one-carbon groups required for the biosynthesis of purines, thymidylate, methionine, and other important biomolecules. Also exhibits THF-independent aldolase activity toward beta-hydroxyamino acids, producing glycine and aldehydes, via a retro-aldol mechanism. This chain is Serine hydroxymethyltransferase, found in Klebsiella pneumoniae (strain 342).